Here is a 257-residue protein sequence, read N- to C-terminus: Na(+)-translocating NADH-quinone reductase subunit C (257 aa).

The helical transmembrane segment at 12–32 (LFVVIALSLVCSIIVSAAAVG) threads the bilayer. Threonine 225 carries the FMN phosphoryl threonine modification.

Belongs to the NqrC family. In terms of assembly, composed of six subunits; NqrA, NqrB, NqrC, NqrD, NqrE and NqrF. It depends on FMN as a cofactor.

The protein localises to the cell inner membrane. The catalysed reaction is a ubiquinone + n Na(+)(in) + NADH + H(+) = a ubiquinol + n Na(+)(out) + NAD(+). Functionally, NQR complex catalyzes the reduction of ubiquinone-1 to ubiquinol by two successive reactions, coupled with the transport of Na(+) ions from the cytoplasm to the periplasm. NqrA to NqrE are probably involved in the second step, the conversion of ubisemiquinone to ubiquinol. The polypeptide is Na(+)-translocating NADH-quinone reductase subunit C (Vibrio cholerae serotype O1 (strain ATCC 39541 / Classical Ogawa 395 / O395)).